The sequence spans 309 residues: Large ribosomal subunit protein mL45 (309 aa).

This sequence belongs to the mitochondrion-specific ribosomal protein mL45 family. In terms of assembly, component of the mitochondrial ribosome large subunit (39S) which comprises a 16S rRNA and about 50 distinct proteins.

Its subcellular location is the mitochondrion. Functionally, component of the mitochondrial large ribosomal subunit (mt-LSU). Within the mitochondrial ribosomes, required to direct the nascent polypeptide toward the tunnel exit and position the exit at a distance from the membrane surface. The polypeptide is Large ribosomal subunit protein mL45 (mrpl45) (Xenopus tropicalis (Western clawed frog)).